A 244-amino-acid polypeptide reads, in one-letter code: Serine-rich single-pass membrane protein 1 (244 aa).

A helical membrane pass occupies residues 35 to 55 (CGTIGNFLLWYFVIVFVLMFF). Disordered stretches follow at residues 65-112 (DKKD…LTPV), 132-191 (QSQF…LGSY), and 213-244 (HSQQKASVTPPMKGDSPEESSISDINTKFSKF). Basic and acidic residues predominate over residues 80–94 (ASKETSYKWQSKDGA). Composition is skewed to polar residues over residues 97-112 (PSQTMKKPKQNQLTPV) and 132-142 (QSQFNEVNQNQ). Residues 161–176 (SWKESESEHHPSPDSI) are compositionally biased toward basic and acidic residues. Positions 231–244 (ESSISDINTKFSKF) are enriched in polar residues.

It localises to the membrane. In Macaca fascicularis (Crab-eating macaque), this protein is Serine-rich single-pass membrane protein 1 (SSMEM1).